Here is a 375-residue protein sequence, read N- to C-terminus: Trichodiene synthase (375 aa).

It belongs to the trichodiene synthase family.

The catalysed reaction is (2E,6E)-farnesyl diphosphate = trichodiene + diphosphate. It participates in sesquiterpene biosynthesis; trichothecene biosynthesis. In terms of biological role, TS is a member of the terpene cyclase group of enzymes. It catalyzes the isomerization and cyclization of farnesyl pyro-phosphate to form trichodiene, the first cyclic intermediate in the biosynthetic pathway for trichothecenes. It serves to branch trichothecene biosynthesis from the isoprenoid pathway. The polypeptide is Trichodiene synthase (TRI5) (Fusarium pseudograminearum (Wheat and barley crown-rot fungus)).